Consider the following 155-residue polypeptide: SsrA-binding protein (155 aa).

It belongs to the SmpB family.

The protein localises to the cytoplasm. Its function is as follows. Required for rescue of stalled ribosomes mediated by trans-translation. Binds to transfer-messenger RNA (tmRNA), required for stable association of tmRNA with ribosomes. tmRNA and SmpB together mimic tRNA shape, replacing the anticodon stem-loop with SmpB. tmRNA is encoded by the ssrA gene; the 2 termini fold to resemble tRNA(Ala) and it encodes a 'tag peptide', a short internal open reading frame. During trans-translation Ala-aminoacylated tmRNA acts like a tRNA, entering the A-site of stalled ribosomes, displacing the stalled mRNA. The ribosome then switches to translate the ORF on the tmRNA; the nascent peptide is terminated with the 'tag peptide' encoded by the tmRNA and targeted for degradation. The ribosome is freed to recommence translation, which seems to be the essential function of trans-translation. The chain is SsrA-binding protein from Bacillus cereus (strain G9842).